Here is a 380-residue protein sequence, read N- to C-terminus: 4-hydroxy-3-methylbut-2-en-1-yl diphosphate synthase (flavodoxin) (380 aa).

[4Fe-4S] cluster-binding residues include Cys280, Cys283, Cys315, and Glu322.

This sequence belongs to the IspG family. [4Fe-4S] cluster serves as cofactor.

It catalyses the reaction (2E)-4-hydroxy-3-methylbut-2-enyl diphosphate + oxidized [flavodoxin] + H2O + 2 H(+) = 2-C-methyl-D-erythritol 2,4-cyclic diphosphate + reduced [flavodoxin]. The protein operates within isoprenoid biosynthesis; isopentenyl diphosphate biosynthesis via DXP pathway; isopentenyl diphosphate from 1-deoxy-D-xylulose 5-phosphate: step 5/6. Its function is as follows. Converts 2C-methyl-D-erythritol 2,4-cyclodiphosphate (ME-2,4cPP) into 1-hydroxy-2-methyl-2-(E)-butenyl 4-diphosphate. The protein is 4-hydroxy-3-methylbut-2-en-1-yl diphosphate synthase (flavodoxin) of Cutibacterium acnes (strain DSM 16379 / KPA171202) (Propionibacterium acnes).